Reading from the N-terminus, the 696-residue chain is Zinc finger SWIM domain-containing protein 3 (696 aa).

The segment at 531-572 (VDVQLLEDSHQVSKDGCSCSCSFQQWYHLPCRHILALLHTSQ) adopts an SWIM-type zinc-finger fold.

This chain is Zinc finger SWIM domain-containing protein 3 (ZSWIM3), found in Homo sapiens (Human).